A 335-amino-acid polypeptide reads, in one-letter code: Pro-cathepsin H (335 aa).

Residues 1 to 22 form the signal peptide; it reads MWAVLPLLCAGAWLLGAPACGA. Positions 23–97 are cleaved as a propeptide — activation peptide; the sequence is AELAANSLEK…DELKRKYLWS (75 aa). N-linked (GlcNAc...) asparagine glycosylation is found at N72 and N101. 4 disulfides stabilise this stretch: C102–C327, C138–C181, C172–C214, and C272–C322. A propeptide spanning residues 106–115 is cleaved from the precursor; sequence KSNYLRGTGP. Residue C141 is part of the active site. An N-linked (GlcNAc...) asparagine glycan is attached at N230. Residues H281 and N301 contribute to the active site.

It belongs to the peptidase C1 family. In terms of assembly, composed of a mini chain and a large chain. The large chain may be split into heavy and light chain. All chains are held together by disulfide bonds.

The protein localises to the lysosome. It catalyses the reaction Hydrolysis of proteins, acting as an aminopeptidase (notably, cleaving Arg-|-Xaa bonds) as well as an endopeptidase.. In terms of biological role, important for the overall degradation of proteins in lysosomes. This chain is Pro-cathepsin H (CTSH), found in Bos taurus (Bovine).